The primary structure comprises 169 residues: Peptide deformylase (169 aa).

Residues cysteine 93 and histidine 135 each contribute to the Fe cation site. The active site involves glutamate 136. Fe cation is bound at residue histidine 139.

The protein belongs to the polypeptide deformylase family. It depends on Fe(2+) as a cofactor.

It catalyses the reaction N-terminal N-formyl-L-methionyl-[peptide] + H2O = N-terminal L-methionyl-[peptide] + formate. Functionally, removes the formyl group from the N-terminal Met of newly synthesized proteins. Requires at least a dipeptide for an efficient rate of reaction. N-terminal L-methionine is a prerequisite for activity but the enzyme has broad specificity at other positions. The protein is Peptide deformylase of Aquifex aeolicus (strain VF5).